We begin with the raw amino-acid sequence, 66 residues long: Large ribosomal subunit protein bL35 (66 aa).

Composition is skewed to basic residues over residues 1 to 16 (MPKQ…RFKR) and 31 to 45 (HRFH…RQLR). Positions 1–52 (MPKQKTHRASAKRFKRTGNGGLKRSNAYTSHRFHGKTKKQRRQLRKASMVSA) are disordered.

It belongs to the bacterial ribosomal protein bL35 family.

The protein is Large ribosomal subunit protein bL35 of Ligilactobacillus salivarius (strain UCC118) (Lactobacillus salivarius).